Here is a 131-residue protein sequence, read N- to C-terminus: Profilin-1 (131 aa).

A disulfide bridge links Cys-13 with Cys-115. The short motif at 81–97 (AVIRGKKGSGGITVKKT) is the Involved in PIP2 interaction element. At Thr-111 the chain carries Phosphothreonine.

This sequence belongs to the profilin family. Multimer. Occurs in many kinds of cells as a complex with monomeric actin in a 1:1 ratio. In terms of processing, phosphorylated by MAP kinases. As to expression, pollen specific.

The protein resides in the cytoplasm. It is found in the cytoskeleton. Binds to actin and affects the structure of the cytoskeleton. At high concentrations, profilin prevents the polymerization of actin, whereas it enhances it at low concentrations. By binding to PIP2, it inhibits the formation of IP3 and DG. The sequence is that of Profilin-1 (PRO1) from Zea mays (Maize).